The following is a 421-amino-acid chain: MALVVQKYGGSSVADAERIRRVAERIVATKKQGNDVVVVVSAMGDTTDDLLDLAQQVCPAPPPRELDMLLTAGERISNALVAMAIESLGAHARSFTGSQAGVITTGTHGNAKIIDVTPGRLQTALEEGRVVLVAGFQGVSQDTKDVTTLGRGGSDTTAVAMAAALGADVCEIYTDVDGIFSADPRIVRNARKLDTVTFEEMLEMAACGAKVLMLRCVEYARRHNIPVHVRSSYSDRPGTVVVGSIKDVPMEDPILTGVAHDRSEAKVTIVGLPDIPGYAAKVFRAVADADVNIDMVLQNVSKVEDGKTDITFTCSRDVGPAAVEKLDSLRNEIGFSQLLYDDHIGKVSLIGAGMRSHPGVTATFCEALAAVGVNIELISTSEIRISVLCRDTELDKAVVALHEAFGLGGDEEATVYAGTGR.

7-10 (KYGG) provides a ligand contact to ATP. 25–30 (RIVATK) contacts substrate. S41 provides a ligand contact to ATP. Substrate is bound by residues 45–49 (DTTDD), E74, 125–126 (LE), 151–154 (RGGS), and S154. ATP contacts are provided by residues 174–175 (TD), 180–185 (FSADPR), and K210. ACT domains lie at 267–348 (VTIV…GKVS) and 349–421 (LIGA…GTGR). Residues D274, 274 to 279 (DIPGYA), 292 to 294 (NID), Q298, 360 to 361 (VT), 374 to 375 (NI), and 381 to 382 (SE) contribute to the substrate site.

Belongs to the aspartokinase family. Heterotetramer consisting of 2 isoforms Alpha (catalytic and regulation) and of a homodimer of 2 isoforms Beta (regulation).

It carries out the reaction L-aspartate + ATP = 4-phospho-L-aspartate + ADP. The protein operates within amino-acid biosynthesis; L-lysine biosynthesis via DAP pathway; (S)-tetrahydrodipicolinate from L-aspartate: step 1/4. Its pathway is amino-acid biosynthesis; L-methionine biosynthesis via de novo pathway; L-homoserine from L-aspartate: step 1/3. It functions in the pathway amino-acid biosynthesis; L-threonine biosynthesis; L-threonine from L-aspartate: step 1/5. Its activity is regulated as follows. Feedback inhibition by lysine and threonine. Catalyzes the phosphorylation of the beta-carboxyl group of aspartic acid with ATP to yield 4-phospho-L-aspartate, which is involved in the branched biosynthetic pathway leading to the biosynthesis of amino acids lysine, threonine, isoleucine and methionine. This is Aspartokinase (ask) from Mycobacterium bovis (strain ATCC BAA-935 / AF2122/97).